A 158-amino-acid chain; its full sequence is Cytochrome b6-f complex subunit 4 (158 aa).

Helical transmembrane passes span Leu34–Val54, Leu93–Glu113, and Thr129–Ile149.

This sequence belongs to the cytochrome b family. PetD subfamily. The 4 large subunits of the cytochrome b6-f complex are cytochrome b6, subunit IV (17 kDa polypeptide, petD), cytochrome f and the Rieske protein, while the 4 small subunits are petG, petL, petM and petN. The complex functions as a dimer.

It is found in the plastid. It localises to the chloroplast thylakoid membrane. Component of the cytochrome b6-f complex, which mediates electron transfer between photosystem II (PSII) and photosystem I (PSI), cyclic electron flow around PSI, and state transitions. This is Cytochrome b6-f complex subunit 4 from Liriodendron tulipifera (Tuliptree).